Consider the following 754-residue polypeptide: DNA repair protein RAD4 (754 aa).

Residues 23–51 are disordered; that stretch reads EKAPLSRRRRVRRKNQPLPDAKKKFKTGL. Over residues 27–37 the composition is skewed to basic residues; sequence LSRRRRVRRKN. The DNA-binding element occupies 250–269; it reads DFLRAVSKGHGDPDISVQGF. The segment at 701 to 754 is disordered; sequence IANHEARPYSEPSEPEDSLDYVSVDKAEESATDDDVGEDYSDFMKELEMSEESD. Positions 730-741 are enriched in acidic residues; it reads SATDDDVGEDYS.

The protein belongs to the XPC family.

It localises to the cytoplasm. The protein localises to the nucleus. Its function is as follows. Involved in nucleotide excision repair of DNA damaged with UV light, bulky adducts, or cross-linking agents. The chain is DNA repair protein RAD4 (RAD4) from Saccharomyces cerevisiae (strain ATCC 204508 / S288c) (Baker's yeast).